The primary structure comprises 362 residues: Neisseria adhesin A (362 aa).

The first 23 residues, 1-23 (MKHFPSKVLTTAILATFCSGALA), serve as a signal peptide directing secretion. Residues 24 to 169 (ATSDDDVKKA…NIVKIDEKLE (146 aa)) are head domain. Coiled coils occupy residues 90–146 (VTNL…LNKL) and 183–288 (NDIA…KETR). Residues 170–307 (AVADTVDKHA…SGLFQPYNVG (138 aa)) are coiled stalk domain. 4 consecutive transmembrane segments (beta stranded) span residues 307-317 (GRFNVTAAVGG), 321-332 (ESAVAIGTGFRF), 339-345 (KAGVAVG), and 351-362 (SAAYHVGVNYEW). A translocator domain region spans residues 308-362 (RFNVTAAVGGYKSESAVAIGTGFRFTENFAAKAGVAVGTSSGSSAAYHVGVNYEW).

This sequence belongs to the autotransporter-2 (AT-2) (TC 1.B.40) family. As to quaternary structure, forms high molecular weight oligomers in whole cell extracts that are not disrupted by boiling in SDS buffer. Homotrimer. A fragment containing the N-terminal half of the mature protein (residues 24-210, head domain plus part of the stalk) binds human integrin beta-1 (ITGB1). It was not seen to bind immobilized purified CEACAMs 1, 3, 5, 6 or 8 nor commercially prepared type I collagen, fibronectin or matrigel.

It is found in the cell surface. The protein resides in the cell outer membrane. Its function is as follows. Adheres to and induces bacterial uptake by human epithelial cells. Upon expression in engineered Y.enterocolitica confers an 11- to 15-fold increase in bacterial adherence and uptake by human epithelial cell lines; part of the uptake is mediated by integrin beta-1 (ITGB1) suggesting it may be a human receptor for NadA. A bacterial cell surface protein; antisera against this protein induce complement-mediated killing of this and other strains. The chain is Neisseria adhesin A from Neisseria meningitidis serogroup B (strain ATCC BAA-335 / MC58).